The primary structure comprises 327 residues: MGGMKSCYHEPVLAPESVSMLVRGPGLYLDGTLGGGGHSLAILCELERSGWLEGSLLLGIDQDDEALQEAGERLADYREHAVALKGNFGNIAALSAREAGSRGMEPQASGILLDLGVSSHQLDVPLRGFSYMQPGPLDMRMDSGATGTAADILNTAPEAELASIFFRYGEEPLSRVIARAVTTRRVEKGPFHTTDELADLVRSVVFGRERVMKSLSRVFQALRIAVNQELEVLERVLGDGVMLLKPGGRMAVISYHSLEDRMVKRFFSSLTTADWGPKGVGLREPVRPAAAIAVTGKPVRAGAEEVARNPRARSAKMRVIEKMENRE.

Residues 36 to 38 (GGH), aspartate 61, phenylalanine 88, aspartate 114, and glutamine 121 each bind S-adenosyl-L-methionine.

It belongs to the methyltransferase superfamily. RsmH family.

The protein localises to the cytoplasm. The enzyme catalyses cytidine(1402) in 16S rRNA + S-adenosyl-L-methionine = N(4)-methylcytidine(1402) in 16S rRNA + S-adenosyl-L-homocysteine + H(+). Functionally, specifically methylates the N4 position of cytidine in position 1402 (C1402) of 16S rRNA. This Chlorobium phaeovibrioides (strain DSM 265 / 1930) (Prosthecochloris vibrioformis (strain DSM 265)) protein is Ribosomal RNA small subunit methyltransferase H.